The chain runs to 127 residues: MLKEFKEFIARGNVMDLAVGVIVGAAFTAIVNSLVTNIINPLLGIFVGSIDFSNLVFTVGSAHFRYGAFINSVINFLIIAFVVFLLIKLINKLIAKPAEEPEEAVPSQEEKYLQEIVELLKQDKIEH.

3 consecutive transmembrane segments (helical) span residues 19-39 (VGVI…TNII), 42-62 (LLGI…VGSA), and 67-87 (GAFI…FLLI).

It belongs to the MscL family. Homopentamer.

The protein localises to the cell membrane. In terms of biological role, channel that opens in response to stretch forces in the membrane lipid bilayer. May participate in the regulation of osmotic pressure changes within the cell. This is Large-conductance mechanosensitive channel from Levilactobacillus brevis (strain ATCC 367 / BCRC 12310 / CIP 105137 / JCM 1170 / LMG 11437 / NCIMB 947 / NCTC 947) (Lactobacillus brevis).